The sequence spans 245 residues: Balbiani ring A 28 kDa protein (245 aa).

The signal sequence occupies residues 1–16; that stretch reads MKSIIKHILFVVLLIS. Residues Ser-33, Ser-40, Ser-92, Ser-93, and Ser-115 each carry the phosphoserine modification.

As to expression, salivary gland.

It is found in the secreted. Functionally, used by the larvae to construct a supramolecular structure, the larval tube. This is Balbiani ring A 28 kDa protein from Chironomus thummi thummi (Midge).